The primary structure comprises 263 residues: Energy-coupling factor transporter transmembrane protein EcfT (263 aa).

4 helical membrane passes run Ile22–Ile42, Ile69–Val89, Leu105–Leu125, and Thr243–Phe263.

This sequence belongs to the energy-coupling factor EcfT family. As to quaternary structure, forms a stable energy-coupling factor (ECF) transporter complex composed of 2 membrane-embedded substrate-binding proteins (S component), 2 ATP-binding proteins (A component) and 2 transmembrane proteins (T component). May be able to interact with more than 1 S component at a time.

The protein localises to the cell membrane. Functionally, transmembrane (T) component of an energy-coupling factor (ECF) ABC-transporter complex. Unlike classic ABC transporters this ECF transporter provides the energy necessary to transport a number of different substrates. This Exiguobacterium sibiricum (strain DSM 17290 / CCUG 55495 / CIP 109462 / JCM 13490 / 255-15) protein is Energy-coupling factor transporter transmembrane protein EcfT.